A 314-amino-acid chain; its full sequence is Ribosomal RNA small subunit methyltransferase H (314 aa).

Residues 35-37 (GGH), aspartate 54, phenylalanine 83, aspartate 104, and glutamine 111 contribute to the S-adenosyl-L-methionine site.

Belongs to the methyltransferase superfamily. RsmH family.

It is found in the cytoplasm. It carries out the reaction cytidine(1402) in 16S rRNA + S-adenosyl-L-methionine = N(4)-methylcytidine(1402) in 16S rRNA + S-adenosyl-L-homocysteine + H(+). Specifically methylates the N4 position of cytidine in position 1402 (C1402) of 16S rRNA. This is Ribosomal RNA small subunit methyltransferase H from Oenococcus oeni (strain ATCC BAA-331 / PSU-1).